Reading from the N-terminus, the 337-residue chain is Glyceraldehyde-3-phosphate dehydrogenase (337 aa).

NAD(+) contacts are provided by residues arginine 11–isoleucine 12, aspartate 33, and lysine 78. D-glyceraldehyde 3-phosphate-binding positions include serine 149 to threonine 151, threonine 180, threonine 209 to glycine 210, and arginine 232. Catalysis depends on cysteine 150, which acts as the Nucleophile. Position 314 (asparagine 314) interacts with NAD(+).

The protein belongs to the glyceraldehyde-3-phosphate dehydrogenase family. As to quaternary structure, homotetramer.

It is found in the cytoplasm. It carries out the reaction D-glyceraldehyde 3-phosphate + phosphate + NAD(+) = (2R)-3-phospho-glyceroyl phosphate + NADH + H(+). The protein operates within carbohydrate degradation; glycolysis; pyruvate from D-glyceraldehyde 3-phosphate: step 1/5. In Lyophyllum shimeji (Hon-shimeji), this protein is Glyceraldehyde-3-phosphate dehydrogenase (GPD).